A 382-amino-acid chain; its full sequence is Cholinephosphotransferase 1 (382 aa).

The Cytoplasmic segment spans residues 1–51 (MPQCECPEPLSAVQLKRLEEHKYSAAGRSLFEPPCQIYWNWLVQQIPTWVA). The helical transmembrane segment at 52 to 72 (PNTLTTIGLVINVITTVILVY) threads the bilayer. Asn-53 contacts CDP-choline. Residues 73–82 (YSPTATEEVP) are Lumenal-facing. Residues 83-107 (GWAFFLSALGLFIYQSLDAIDGKQA) traverse the membrane as a helical segment. Asp-100 and Asp-103 together coordinate Mg(2+). A CDP-choline-binding site is contributed by Arg-108. Residues 108–114 (RRTNSSS) lie on the Cytoplasmic side of the membrane. The chain crosses the membrane as a helical span at residues 115 to 139 (ALGELFDHGCDAVSTVFVAVGTCIC). Residue Asp-121 participates in Mg(2+) binding. The active-site Proton acceptor is the His-122. Asp-125 provides a ligand contact to Mg(2+). At 140-149 (CGIGAYPNWM) the chain is on the lumenal side. The chain crosses the membrane as a helical span at residues 150–168 (FFCGFVGMFMFFCAHWQTY). Over 169–179 (VSGTLRFGLVD) the chain is Cytoplasmic. Residues 180–196 (VTEVQIAIIIMYLLTAF) traverse the membrane as a helical segment. The Lumenal segment spans residues 197 to 211 (TGVSFWEMRVPVLGV). The chain crosses the membrane as a helical span at residues 212–237 (NLQTFPILGIIGGFLYSTYNYFFVIM). The Cytoplasmic segment spans residues 238–254 (NGGVGKNGSTVADTSVL). A helical transmembrane segment spans residues 255–270 (TPGLHIGLILTLAFII). Over 271–282 (FKKSSSHLFEHH) the chain is Lumenal. Residues 283 to 305 (PCLYVLTFGMVIAKISNKLVVAH) traverse the membrane as a helical segment. Topologically, residues 306–318 (MTKSELHLQDTAF) are cytoplasmic. A helical membrane pass occupies residues 319-328 (IGPGLLFLNQ). Residues 329-335 (YFNSYID) are Lumenal-facing. Residues 336-365 (EHIVLWIAMVLSLVDLVRYCTAVCLQIASH) form a helical membrane-spanning segment. Residues 366–382 (LRIRVFSISPQGHAHKD) are Cytoplasmic-facing.

It belongs to the CDP-alcohol phosphatidyltransferase class-I family. The cofactor is Mg(2+). Mn(2+) serves as cofactor.

The protein resides in the golgi apparatus membrane. It catalyses the reaction CDP-choline + a 1,2-diacyl-sn-glycerol = a 1,2-diacyl-sn-glycero-3-phosphocholine + CMP + H(+). The enzyme catalyses 1-octadecanoyl-2-(5Z,8Z,11Z,14Z-eicosatetraenoyl)-sn-glycerol + CDP-choline = 1-octadecanoyl-2-(5Z,8Z,11Z,14Z-eicosatetraenoyl)-sn-glycero-3-phosphocholine + CMP + H(+). It carries out the reaction 1-hexadecanoyl-2-(9Z-octadecenoyl)-sn-glycerol + CDP-choline = 1-hexadecanoyl-2-(9Z-octadecenoyl)-sn-glycero-3-phosphocholine + CMP + H(+). The catalysed reaction is 1-hexadecanoyl-2-(4Z,7Z,10Z,13Z,16Z,19Z-docosahexaenoyl)-sn-glycerol + CDP-choline = 1-hexadecanoyl-2-(4Z,7Z,10Z,13Z,16Z,19Z-docosahexaenoyl)-sn-glycero-3-phosphocholine + CMP + H(+). It catalyses the reaction 1,2-dioctanoyl-sn-glycerol + CDP-choline = 1,2-dioctanoyl-sn-glycero-3-phosphocholine + CMP + H(+). The protein operates within phospholipid metabolism; phosphatidylcholine biosynthesis; phosphatidylcholine from phosphocholine: step 2/2. Catalyzes the final step of de novo phosphatidylcholine (PC) synthesis, i.e. the transfer of choline phosphate from CDP-choline to the free hydroxyl of a diacylglycerol (DAG), producing a PC. It thereby plays a central role in the formation and maintenance of vesicular membranes. In Danio rerio (Zebrafish), this protein is Cholinephosphotransferase 1 (chpt1).